We begin with the raw amino-acid sequence, 182 residues long: Small ribosomal subunit protein uS4c (182 aa).

Residues 82–143 (MRLDNILFRL…KQRSKALIQN (62 aa)) form the S4 RNA-binding domain.

The protein belongs to the universal ribosomal protein uS4 family. As to quaternary structure, part of the 30S ribosomal subunit. Contacts protein S5. The interaction surface between S4 and S5 is involved in control of translational fidelity.

Its subcellular location is the plastid. It localises to the chloroplast. In terms of biological role, one of the primary rRNA binding proteins, it binds directly to 16S rRNA where it nucleates assembly of the body of the 30S subunit. Functionally, with S5 and S12 plays an important role in translational accuracy. The polypeptide is Small ribosomal subunit protein uS4c (rps4) (Iris domestica (Leopard lily)).